Here is a 557-residue protein sequence, read N- to C-terminus: (-)-germacrene D synthase (557 aa).

The Mg(2+) site is built by aspartate 310, aspartate 314, and glutamate 462. The DDXXD motif motif lies at 310–314 (DDIYD).

It belongs to the terpene synthase family. Tpsa subfamily. Mg(2+) is required as a cofactor. As to expression, expressed in flowers. Detected in stems, young leaves and tendrils.

The protein resides in the cytoplasm. The enzyme catalyses (2E,6E)-farnesyl diphosphate + H2O = (1E,4S,5E,7R)-germacra-1(10),5-dien-11-ol + diphosphate. It catalyses the reaction (2E,6E)-farnesyl diphosphate = (-)-germacrene D + diphosphate. The protein operates within secondary metabolite biosynthesis; terpenoid biosynthesis. Functionally, involved in the biosynthesis of germacrene D. Can use farnesyl diphosphate as substrate, but not geranyl diphosphate or geranylgeranyl diphosphate. Produces mainly (-)-germacrene D along with gamma-cadinene. The chain is (-)-germacrene D synthase from Vitis vinifera (Grape).